We begin with the raw amino-acid sequence, 78 residues long: DNA import protein CedA1 (78 aa).

2 helical membrane-spanning segments follow: residues 12-32 and 53-73; these read STVTEIGWSLFILAWAIGWAL and AIIAAFFLAIGSTIFYLISYI.

In terms of assembly, forms a complex composed of CedA, CedA1 and CedA2.

The protein resides in the cell membrane. Functionally, part of the Ced system, which is involved in DNA import. This chain is DNA import protein CedA1, found in Sulfolobus acidocaldarius (strain ATCC 33909 / DSM 639 / JCM 8929 / NBRC 15157 / NCIMB 11770).